The chain runs to 511 residues: GATOR complex protein NPRL3 (511 aa).

The interval 37 to 58 (KPATKAPSKDPQPSSSNPGQCV) is disordered.

The protein belongs to the NPR3 family. In terms of assembly, probably part of the GATOR complex.

Its subcellular location is the lysosome membrane. In terms of biological role, as a component of the GATOR complex may function in the amino acid-sensing branch of the TORC1 signaling pathway. In Caenorhabditis elegans, this protein is GATOR complex protein NPRL3 (nprl-3).